A 526-amino-acid polypeptide reads, in one-letter code: Carotenoid cleavage oxygenase 1 (526 aa).

Residues 1–33 form a disordered region; the sequence is MAEYVFSDAPKDSHGNGVKDAVPGKQPEELPPA. Positions 133 and 164 each coordinate piceatannol. Residues Tyr133 and Lys164 each coordinate trans-resveratrol. Fe cation contacts are provided by His197, His248, and His313. Glu383 serves as a coordination point for piceatannol. Glu383 lines the trans-resveratrol pocket. His510 contributes to the Fe cation binding site.

The protein belongs to the carotenoid oxygenase family. It depends on Fe(2+) as a cofactor.

The enzyme catalyses trans-resveratrol + O2 = 3,5-dihydroxybenzaldehyde + 4-hydroxybenzaldehyde. It catalyses the reaction piceatannol + O2 = 3,5-dihydroxybenzaldehyde + 3,4-dihydroxybenzaldehyde. Dioxygenase that cleaves the interphenyl C-alpha-C-beta double bond of resveratrol to yield 3,5-dihydroxybenzaldehyde and 4-hydroxybenzaldehyde. Also cleaves piceatannol, a compound that differs from resveratrol only in the occurrence of an additional hydroxyl group, which leads to the production of 3,4-dihydroxybenzaldehyde and 3,5-hydroxybenzaldehyde. Is not able to cleave trans-stilbene, 4-monohydroxy-trans-stilbene, 3,5-dihydroxy-trans-stilbene (pinosylvin), trismethoxy-resveratrol, and 3,3',5-trihydroxy-4'-methoxystilbene-3-O-beta-D-glucoside. Is not involved in carotenoid metabolism. The sequence is that of Carotenoid cleavage oxygenase 1 from Neurospora crassa (strain ATCC 24698 / 74-OR23-1A / CBS 708.71 / DSM 1257 / FGSC 987).